A 262-amino-acid polypeptide reads, in one-letter code: MSERESWHKEIDLFLVAMGYFTRIPMPKWVEADSDKLNKASRYFGLVGLLVGLLSAIVFWLTQNWLPAGVSVLLAMLVGVLLTGGFHEDGLADTFDGFGGGWTAEDKLRIMKDSRLGSYGALALMLALLLKWQLLVELALYDPVVAGSALIVAHTVSRMVSASIIFSEKYVRDDETSKSKPLSQHQGINELLILIASGVLVLLFLKGLAALSLLLVMIGLRRLIIVIFRRQIGGYTGDTLGAAQQIAEIVCYFVLLVVGNIL.

The next 6 helical transmembrane spans lie at 43 to 63 (YFGL…WLTQ), 66 to 86 (LPAG…TGGF), 120 to 140 (GALA…ELAL), 146 to 166 (AGSA…SIIF), 191 to 211 (LLIL…LAAL), and 242 to 262 (AAQQ…GNIL).

Belongs to the CobS family. The cofactor is Mg(2+).

It localises to the cell inner membrane. It catalyses the reaction alpha-ribazole + adenosylcob(III)inamide-GDP = adenosylcob(III)alamin + GMP + H(+). It carries out the reaction alpha-ribazole 5'-phosphate + adenosylcob(III)inamide-GDP = adenosylcob(III)alamin 5'-phosphate + GMP + H(+). The protein operates within cofactor biosynthesis; adenosylcobalamin biosynthesis; adenosylcobalamin from cob(II)yrinate a,c-diamide: step 7/7. Its function is as follows. Joins adenosylcobinamide-GDP and alpha-ribazole to generate adenosylcobalamin (Ado-cobalamin). Also synthesizes adenosylcobalamin 5'-phosphate from adenosylcobinamide-GDP and alpha-ribazole 5'-phosphate. The protein is Adenosylcobinamide-GDP ribazoletransferase of Shewanella baltica (strain OS155 / ATCC BAA-1091).